Reading from the N-terminus, the 283-residue chain is Large ribosomal subunit protein uL4 (283 aa).

It belongs to the universal ribosomal protein uL4 family. As to quaternary structure, part of the 50S ribosomal subunit.

Functionally, one of the primary rRNA binding proteins, this protein initially binds near the 5'-end of the 23S rRNA. It is important during the early stages of 50S assembly. It makes multiple contacts with different domains of the 23S rRNA in the assembled 50S subunit and ribosome. Forms part of the polypeptide exit tunnel. The sequence is that of Large ribosomal subunit protein uL4 from Pyrobaculum aerophilum (strain ATCC 51768 / DSM 7523 / JCM 9630 / CIP 104966 / NBRC 100827 / IM2).